The following is a 191-amino-acid chain: UPF0312 protein Pmen_0419 (191 aa).

Positions 1-22 (MLKNALAALVLGSALIGGQAMA) are cleaved as a signal peptide.

The protein belongs to the UPF0312 family. Type 1 subfamily.

The protein resides in the periplasm. This is UPF0312 protein Pmen_0419 from Ectopseudomonas mendocina (strain ymp) (Pseudomonas mendocina).